The following is a 154-amino-acid chain: MSIELDLQLAVENEHGLPSEAEFALWLSRTITPFQPQAEVTVRIVDEAESHALNLNYRGKDKPTNVLSFPFEAPPGMEMDLLGDLVICRQVVEREAIEQNKPLQAHWAHMVVHGSLHLLGYDHIEDDEAEEMESLETEIMQEMGFTDPYLAEKE.

The Zn(2+) site is built by His113, His117, and His123.

The protein belongs to the endoribonuclease YbeY family. Requires Zn(2+) as cofactor.

Its subcellular location is the cytoplasm. Single strand-specific metallo-endoribonuclease involved in late-stage 70S ribosome quality control and in maturation of the 3' terminus of the 16S rRNA. The chain is Endoribonuclease YbeY from Vibrio cholerae serotype O1 (strain ATCC 39541 / Classical Ogawa 395 / O395).